We begin with the raw amino-acid sequence, 213 residues long: Ribonuclease HII (213 aa).

The region spanning 27-213 is the RNase H type-2 domain; it reads HAVAGVDEAG…FRGVKEHVAP (187 aa). A divalent metal cation is bound by residues aspartate 33, glutamate 34, and aspartate 125.

Belongs to the RNase HII family. The cofactor is Mn(2+). Requires Mg(2+) as cofactor.

It localises to the cytoplasm. The catalysed reaction is Endonucleolytic cleavage to 5'-phosphomonoester.. Endonuclease that specifically degrades the RNA of RNA-DNA hybrids. This Geobacter metallireducens (strain ATCC 53774 / DSM 7210 / GS-15) protein is Ribonuclease HII.